Consider the following 274-residue polypeptide: 4-diphosphocytidyl-2-C-methyl-D-erythritol kinase (274 aa).

Lys-8 is a catalytic residue. 94-104 provides a ligand contact to ATP; that stretch reads PSGAGLGGGSA. Asp-136 is a catalytic residue.

It belongs to the GHMP kinase family. IspE subfamily.

It catalyses the reaction 4-CDP-2-C-methyl-D-erythritol + ATP = 4-CDP-2-C-methyl-D-erythritol 2-phosphate + ADP + H(+). The protein operates within isoprenoid biosynthesis; isopentenyl diphosphate biosynthesis via DXP pathway; isopentenyl diphosphate from 1-deoxy-D-xylulose 5-phosphate: step 3/6. Catalyzes the phosphorylation of the position 2 hydroxy group of 4-diphosphocytidyl-2C-methyl-D-erythritol. The sequence is that of 4-diphosphocytidyl-2-C-methyl-D-erythritol kinase from Bacteroides fragilis (strain YCH46).